A 527-amino-acid chain; its full sequence is Proline--tRNA ligase (527 aa).

This sequence belongs to the class-II aminoacyl-tRNA synthetase family. ProS type 3 subfamily. In terms of assembly, homodimer.

It localises to the cytoplasm. The enzyme catalyses tRNA(Pro) + L-proline + ATP = L-prolyl-tRNA(Pro) + AMP + diphosphate. Catalyzes the attachment of proline to tRNA(Pro) in a two-step reaction: proline is first activated by ATP to form Pro-AMP and then transferred to the acceptor end of tRNA(Pro). The protein is Proline--tRNA ligase of Sphingopyxis alaskensis (strain DSM 13593 / LMG 18877 / RB2256) (Sphingomonas alaskensis).